A 150-amino-acid polypeptide reads, in one-letter code: Large ribosomal subunit protein uL15 (150 aa).

The interval 1–51 (MKLHTLRPAKGSVKTSKRIGRGTGSGRGGTSTKGHKGAKSRSGYSSKIGFE) is disordered. Gly residues predominate over residues 21-31 (RGTGSGRGGTS).

The protein belongs to the universal ribosomal protein uL15 family. In terms of assembly, part of the 50S ribosomal subunit.

In terms of biological role, binds to the 23S rRNA. The polypeptide is Large ribosomal subunit protein uL15 (Cytophaga hutchinsonii (strain ATCC 33406 / DSM 1761 / CIP 103989 / NBRC 15051 / NCIMB 9469 / D465)).